The following is a 635-amino-acid chain: Protein MICRORCHIDIA 1 (635 aa).

The segment at 491–511 (RTVIPDQPPTVNTYNPSPLPS) is disordered. Residues 588–635 (MRCEEYVKKENEVEQTVKSLEKELEEIKSKCAQLALLVDAKKKEMQQV) adopt a coiled-coil conformation.

Belongs to the MORC ATPase protein family. As to quaternary structure, homodimer and heterodimer with MORC6. Component of an RNA-directed DNA methylation (RdDM) complex that contains at least MORC6, MORC1/CRT1, MORC2, SWI3D and SUVH9. Binds directly to SUVH2 and SUVH9. Interacts with the resistance proteins RCY1, RPM1, SNC1, RPP8, SSI4 and RPS2. The interactions with various resistance proteins are disrupted when these resistance proteins are activated. Interacts with the PAMP recognition receptor FLS2. Requires Mg(2+) as cofactor. It depends on Mn(2+) as a cofactor. In terms of tissue distribution, expressed constitutively.

Its subcellular location is the nucleus. The protein resides in the endosome. Mediator of defense signaling triggered by distinct classes of R proteins. Required during hypersensitive response (HR) that confers disease resistance to turnip crinkle virus (TCV). Exhibits ATPase activity. Contributes to resistance against Pseudomonas syringae and Hyaloperonospora arabidopsidis, at early stages prior to cytosolic calcium ions Ca(2+) accumulation. Required for pathogen-associated molecular pattern (PAMP)-triggered immunity (PTI), basal resistance, non-host resistance and systemic acquired resistance (SAR). Binds DNA/RNA in a non-specific manner and exhibits endonuclease activity. Probably involved in DNA repair. Required for both RPP8- and SSI4-mediated resistance responses, thus being involved in both TIR- and CC-NB-LRR pathways. Involved in RNA-directed DNA methylation (RdDM) as a component of the RdDM machinery and required for gene silencing. May also be involved in the regulation of chromatin architecture to maintain gene silencing. The chain is Protein MICRORCHIDIA 1 from Arabidopsis thaliana (Mouse-ear cress).